The chain runs to 301 residues: DSC E3 ubiquitin ligase complex subunit B (301 aa).

Transmembrane regions (helical) follow at residues 9 to 29 (APIT…LSIL), 52 to 72 (LATW…AAML), and 90 to 110 (TFII…LVLL). A compositionally biased stretch (low complexity) spans 268–284 (AAAAASGNAGSASEASG). The segment at 268–301 (AAAAASGNAGSASEASGQRQRRREGGIMDRLRAL) is disordered. Basic and acidic residues predominate over residues 290–301 (REGGIMDRLRAL).

As to quaternary structure, component of the DSC E3 ubiquitin ligase complex composed of dscA, dscB, dscC and dscD.

It is found in the endoplasmic reticulum membrane. The enzyme catalyses S-ubiquitinyl-[E2 ubiquitin-conjugating enzyme]-L-cysteine + [acceptor protein]-L-lysine = [E2 ubiquitin-conjugating enzyme]-L-cysteine + N(6)-ubiquitinyl-[acceptor protein]-L-lysine.. The protein operates within protein modification; protein ubiquitination. In terms of biological role, component of the DSC E3 ubiquitin ligase complex which is required for the srbA transcriptional activator proteolytic cleavage to release the soluble transcription factor from the membrane in low oxygen or sterol conditions. Required for growth during hypoxia and triazole drug susceptibility, as well as for virulence in a murine model of invasive pulmonary aspergillosis (IPA). In Aspergillus fumigatus (strain ATCC MYA-4609 / CBS 101355 / FGSC A1100 / Af293) (Neosartorya fumigata), this protein is DSC E3 ubiquitin ligase complex subunit B.